The sequence spans 302 residues: GTP cyclohydrolase FolE2 (302 aa).

The segment at 1 to 27 (MPKKQLPPKEERHKLFGSVPPKERTKP) is disordered.

This sequence belongs to the GTP cyclohydrolase IV family.

It catalyses the reaction GTP + H2O = 7,8-dihydroneopterin 3'-triphosphate + formate + H(+). Its pathway is cofactor biosynthesis; 7,8-dihydroneopterin triphosphate biosynthesis; 7,8-dihydroneopterin triphosphate from GTP: step 1/1. In terms of biological role, converts GTP to 7,8-dihydroneopterin triphosphate. This is GTP cyclohydrolase FolE2 from Oceanobacillus iheyensis (strain DSM 14371 / CIP 107618 / JCM 11309 / KCTC 3954 / HTE831).